The primary structure comprises 205 residues: ATP phosphoribosyltransferase (205 aa).

This sequence belongs to the ATP phosphoribosyltransferase family. Short subfamily. In terms of assembly, heteromultimer composed of HisG and HisZ subunits.

It localises to the cytoplasm. The enzyme catalyses 1-(5-phospho-beta-D-ribosyl)-ATP + diphosphate = 5-phospho-alpha-D-ribose 1-diphosphate + ATP. It functions in the pathway amino-acid biosynthesis; L-histidine biosynthesis; L-histidine from 5-phospho-alpha-D-ribose 1-diphosphate: step 1/9. Its function is as follows. Catalyzes the condensation of ATP and 5-phosphoribose 1-diphosphate to form N'-(5'-phosphoribosyl)-ATP (PR-ATP). Has a crucial role in the pathway because the rate of histidine biosynthesis seems to be controlled primarily by regulation of HisG enzymatic activity. This chain is ATP phosphoribosyltransferase, found in Staphylococcus saprophyticus subsp. saprophyticus (strain ATCC 15305 / DSM 20229 / NCIMB 8711 / NCTC 7292 / S-41).